The following is a 704-amino-acid chain: MADTGLRRVVPSDLYPLVLGFLRDNQLSEVASKFAKATGATQQDANASSLLDIYSFWLKSTKAPKVKLQSNGPVAKKAKKETSSSDSSEDSSEEEDKAQVPTQKAAAPAKRASLPQHAGKAAAKASESSSSEESSEEEEEEDKKKKPVQQKAVKPQAKAVRPPPKKAESSESESDSSSEDEAPQTQKPKAAATAAKAPTKAQTKAPAKPGPPAKAQPKAANGKAGSSSSSSSSSSSDDSEEEKKAAAPLKKTAPKKQVVAKAPVKVTAAPTQKSSSSEDSSSEEEEEQKKPMKKKAGPYSSVPPPSVSLSKKSVGAQSPKKAAAQTQPADSSADSSEESDSSSEEEKKTPAKTVVSKTPAKPAPVKKKAESSSDSSDSDSSEDEAPAKPVSATKSPLSKPAVTPKPPAAKAVATPKQPAGSGQKPQSRKADSSSSEEESSSSEEEATKKSVTTPKARVTAKAAPSLPAKQAPRAGGDSSSDSESSSSEEEKKTPPKPPAKKKAAGAAVPKPTPVKKAAAESSSSSSSSEDSSEEEKKKPKSKATPKPQAGKANGVPASQNGKAGKESEEEEEDTEQNKKAAGTKPGSGKKRKHNETADEAATPQSKKVKLQTPNTFPKRKKGEKRASSPFRRVREEEIEVDSRVADNSFDAKRGAAGDWGERANQVLKFTKGKSFRHEKTKKKRGSYRGGSISVQVNSVKFDSE.

The 33-residue stretch at Val10–Gln42 folds into the LisH domain. Lys33 bears the N6-acetyllysine mark. Positions Lys65–Ile638 are disordered. Residues Lys67 and Lys76 each participate in a glycyl lysine isopeptide (Lys-Gly) (interchain with G-Cter in SUMO2) cross-link. Acidic serine cluster repeat units lie at residues Ser84 to Glu95 and Glu127 to Glu138. The tract at residues Ser84–Glu570 is 11 X 12 AA approximate repeats of an acidic serine cluster. A phosphoserine mark is found at Ser87, Ser88, Ser91, and Ser92. The segment covering Ser87–Asp96 has biased composition (acidic residues). Diphosphoserine occurs at positions 88 and 91. 2 stretches are compositionally biased toward low complexity: residues Lys120 to Glu132 and Gln149 to Val160. An Acidic serine cluster 3 repeat occupies Ser170–Glu181. The span at Ser170–Ala182 shows a compositional bias: acidic residues. 3 stretches are compositionally biased toward low complexity: residues Pro183 to Ala207, Ala215 to Ser236, and Ala246 to Asp279. Residues Lys189 and Lys200 each participate in a glycyl lysine isopeptide (Lys-Gly) (interchain with G-Cter in SUMO2) cross-link. 3 Acidic serine cluster repeats span residues Ser231–Glu242, Ser274–Glu285, and Ser335–Glu346. Glycyl lysine isopeptide (Lys-Gly) (interchain with G-Cter in SUMO2) cross-links involve residues Lys352 and Lys357. 3 positions are modified to phosphoserine: Ser372, Ser373, and Ser376. Residues Ser373–Glu384 form an Acidic serine cluster 7 repeat. Residues Lys399, Lys405, Lys410, and Lys416 each participate in a glycyl lysine isopeptide (Lys-Gly) (interchain with G-Cter in SUMO2) cross-link. Positions Ala408–Ala419 are enriched in low complexity. Lys424 is modified (N6-acetyllysine; alternate). Lys424 participates in a covalent cross-link: Glycyl lysine isopeptide (Lys-Gly) (interchain with G-Cter in SUMO1); alternate. Lys424 participates in a covalent cross-link: Glycyl lysine isopeptide (Lys-Gly) (interchain with G-Cter in SUMO2); alternate. Over residues Ser434–Glu444 the composition is skewed to acidic residues. The Acidic serine cluster 8 repeat unit spans residues Ser434–Glu445. Residues Lys449 and Lys461 each participate in a glycyl lysine isopeptide (Lys-Gly) (interchain with G-Cter in SUMO2) cross-link. At Ser465 the chain carries Phosphoserine. Composition is skewed to low complexity over residues Ala474 to Ser485 and Ala504 to Glu529. The Acidic serine cluster 9 repeat unit spans residues Ser479–Glu490. Lys510 is covalently cross-linked (Glycyl lysine isopeptide (Lys-Gly) (interchain with G-Cter in SUMO2)). Acidic serine cluster repeat units lie at residues Ser524–Glu535 and Gln559–Glu570. A Phosphoserine modification is found at Ser567. Lys584 participates in a covalent cross-link: Glycyl lysine isopeptide (Lys-Gly) (interchain with G-Cter in SUMO2). The residue at position 587 (Ser587) is a Phosphoserine. Position 596 is a phosphothreonine (Thr596). Lys609 is covalently cross-linked (Glycyl lysine isopeptide (Lys-Gly) (interchain with G-Cter in SUMO2)). Thr612 and Thr615 each carry phosphothreonine. A Glycyl lysine isopeptide (Lys-Gly) (interchain with G-Cter in SUMO2) cross-link involves residue Lys618. 2 positions are modified to phosphoserine: Ser627 and Ser648. Residue Lys652 forms a Glycyl lysine isopeptide (Lys-Gly) (interchain with G-Cter in SUMO2) linkage. Lys668 carries the post-translational modification N6-acetyllysine; alternate. Lys668 participates in a covalent cross-link: Glycyl lysine isopeptide (Lys-Gly) (interchain with G-Cter in SUMO2); alternate. Arg688 carries the post-translational modification Omega-N-methylarginine. Ser691 carries the post-translational modification Phosphoserine. A Glycyl lysine isopeptide (Lys-Gly) (interchain with G-Cter in SUMO2) cross-link involves residue Lys700. Ser703 is modified (phosphoserine).

This sequence belongs to the NOLC1 family. Interacts with RNA polymerase I 194 kDa subunit (RPA194) and with casein kinase-II. Interacts with DKC1/NAP57, NOP58 and fibrillarin. Undergoes rapid and massive phosphorylation/dephosphorylation cycles on CK2 and PKC sites. NOLC1 is one of the mostly phosphorylated proteins in the cell. Post-translationally, ubiquitinated. Monoubiquitination by the BCR(KBTBD8) complex promotes the formation of a NOLC1-TCOF1 complex that acts as a platform to connect RNA polymerase I with enzymes responsible for ribosomal processing and modification, leading to remodel the translational program of differentiating cells in favor of neural crest specification. In terms of processing, pyrophosphorylated by 5-diphosphoinositol pentakisphosphate (5-IP7). Serine pyrophosphorylation is achieved by Mg(2+)-dependent, but enzyme independent transfer of a beta-phosphate from a inositol pyrophosphate to a pre-phosphorylated serine residue.

The protein resides in the cytoplasm. The protein localises to the nucleus. It localises to the nucleolus. Functionally, nucleolar protein that acts as a regulator of RNA polymerase I by connecting RNA polymerase I with enzymes responsible for ribosomal processing and modification. Required for neural crest specification: following monoubiquitination by the BCR(KBTBD8) complex, associates with TCOF1 and acts as a platform to connect RNA polymerase I with enzymes responsible for ribosomal processing and modification, leading to remodel the translational program of differentiating cells in favor of neural crest specification. Involved in nucleologenesis, possibly by playing a role in the maintenance of the fundamental structure of the fibrillar center and dense fibrillar component in the nucleolus. It has intrinsic GTPase and ATPase activities. This Rattus norvegicus (Rat) protein is Nucleolar and coiled-body phosphoprotein 1.